The primary structure comprises 351 residues: Phosphatidylinositol transfer protein PDR16 (351 aa).

One can recognise a CRAL-TRIO domain in the interval 135–295 (LVAVENESGK…LYGGDLKFKY (161 aa)).

In terms of assembly, homodimer. Apo-SFH3 forms a dimer through the hydrophobic interaction of gating helices. Binding of phosphatidylinositol leads to dissociation of the dimer into monomers in a reversible manner.

It is found in the lipid droplet. The protein resides in the microsome membrane. The protein localises to the endoplasmic reticulum membrane. It catalyses the reaction a 1,2-diacyl-sn-glycero-3-phospho-(1D-myo-inositol)(in) = a 1,2-diacyl-sn-glycero-3-phospho-(1D-myo-inositol)(out). Its function is as follows. Has phosphatidylinositol transfer activity. Involved in the regulation of the phospholipid composition of plasma- and endomembranes. Altering plasma membrane composition may provide a possible mechanism for multidrug resistance. Involved in the regulation of sterol biosynthesis. Contributes to efficient phospholipase D1 activation in the regulation of phospholipid turnover. Regulates the release of fatty acids from lipid droplets. This chain is Phosphatidylinositol transfer protein PDR16 (PDR16), found in Saccharomyces cerevisiae (strain ATCC 204508 / S288c) (Baker's yeast).